The sequence spans 403 residues: Phosphopentomutase (403 aa).

Positions 13, 298, 303, 339, 340, and 351 each coordinate Mn(2+).

This sequence belongs to the phosphopentomutase family. Mn(2+) serves as cofactor.

Its subcellular location is the cytoplasm. The catalysed reaction is 2-deoxy-alpha-D-ribose 1-phosphate = 2-deoxy-D-ribose 5-phosphate. It carries out the reaction alpha-D-ribose 1-phosphate = D-ribose 5-phosphate. It participates in carbohydrate degradation; 2-deoxy-D-ribose 1-phosphate degradation; D-glyceraldehyde 3-phosphate and acetaldehyde from 2-deoxy-alpha-D-ribose 1-phosphate: step 1/2. Its function is as follows. Isomerase that catalyzes the conversion of deoxy-ribose 1-phosphate (dRib-1-P) and ribose 1-phosphate (Rib-1-P) to deoxy-ribose 5-phosphate (dRib-5-P) and ribose 5-phosphate (Rib-5-P), respectively. This chain is Phosphopentomutase, found in Streptococcus pyogenes serotype M3 (strain ATCC BAA-595 / MGAS315).